We begin with the raw amino-acid sequence, 604 residues long: MSGTANSRRKEVLRVPVIDLNRVSDEEQLLPVVRAILLQHDTFLLKNYANKAVLDALLAGLTTKDLPDTSQGFDANFTGTLPLEDDVWLEQYIFDTDPQLRFDRKCRNESLCSIYSRLFKLGLFFAQLCVKSVVSSAELQDCISTSHYATKLTRYFNDNGSTHDGADAGATVLPTGDDFQYLFERDYVTFLPTGVLTIFPCAKAIRYKPSTMATTDNSWVSIDEPDCLLFHTGTLLARWSQGMHTTSPLQIDPRANIVSLTIWPPLTTPISSKGEGTIANHLLEQQIKAFPKVAQQYYPRELSILRLQDAMKFVKELFTVCETVLSLNALSRSTGVPPELHVLLPQISSMMKRKIVQDDILKLLTIWSDAYVVELNSRGELTMNLPKRDNLTTLTNKSRTLAFVERAESWYQQVIASKDEIMTDVPAFKINKRRSSSNSKTVLSSKVQTKSSNANALNNSRYLANSKENFMYKEKMPDSQANLMDRLRERERRSAALLSQRQKRYQQFLAMKMTQVFDILFSLTRGQPYTETYLSSLIVDSLQDSNNPIGTKEASEILAGLQGILPMDISVHQVDGGLKVYRWNSLDKNRFSKLLQIHKSKQQD.

This sequence belongs to the Cdt1 family. Associates with the MCM2-7 complex. Interacts with MCM2, ORC1, ORC2 and ORC6.

It localises to the cytoplasm. Its subcellular location is the nucleus. DNA replication licensing factor, required for pre-replication complex assembly. Faithful duplication of the genetic material requires 'once per cell cycle' DNA replication initiation and elongation. Central to this control is the tightly regulated formation of prereplicative complexes (preRCs) at future origins of DNA replication. Required for the recruitment of the MCM2-7 helicase complex to the replication origins. This chain is Cell division cycle protein CDT1 (TAH11), found in Saccharomyces cerevisiae (strain ATCC 204508 / S288c) (Baker's yeast).